A 74-amino-acid chain; its full sequence is MCVCIETLKSLNSNNQGLSSNEQAFGSPSNMNESMVFGSPSSSVLSSSFKGSNSTCATNKSASSAMFSRPFYYE.

This is an uncharacterized protein from Dictyostelium discoideum (Social amoeba).